We begin with the raw amino-acid sequence, 518 residues long: Protein nucleotidyltransferase YdiU (518 aa).

A compositionally biased stretch (basic and acidic residues) spans 1–10 (MTHLQFDNRL). The segment at 1–23 (MTHLQFDNRLRAQLPGDPEQGPR) is disordered. The ATP site is built by glycine 100, glycine 102, arginine 103, lysine 123, aspartate 135, glycine 136, arginine 193, and arginine 200. The active-site Proton acceptor is the aspartate 270. Mg(2+)-binding residues include asparagine 271 and aspartate 280. Aspartate 280 serves as a coordination point for ATP.

This sequence belongs to the SELO family. Mg(2+) serves as cofactor. Mn(2+) is required as a cofactor.

The catalysed reaction is L-seryl-[protein] + ATP = 3-O-(5'-adenylyl)-L-seryl-[protein] + diphosphate. The enzyme catalyses L-threonyl-[protein] + ATP = 3-O-(5'-adenylyl)-L-threonyl-[protein] + diphosphate. It catalyses the reaction L-tyrosyl-[protein] + ATP = O-(5'-adenylyl)-L-tyrosyl-[protein] + diphosphate. It carries out the reaction L-histidyl-[protein] + UTP = N(tele)-(5'-uridylyl)-L-histidyl-[protein] + diphosphate. The catalysed reaction is L-seryl-[protein] + UTP = O-(5'-uridylyl)-L-seryl-[protein] + diphosphate. The enzyme catalyses L-tyrosyl-[protein] + UTP = O-(5'-uridylyl)-L-tyrosyl-[protein] + diphosphate. Functionally, nucleotidyltransferase involved in the post-translational modification of proteins. It can catalyze the addition of adenosine monophosphate (AMP) or uridine monophosphate (UMP) to a protein, resulting in modifications known as AMPylation and UMPylation. The polypeptide is Protein nucleotidyltransferase YdiU (Xanthomonas campestris pv. campestris (strain B100)).